Here is a 146-residue protein sequence, read N- to C-terminus: Leptin (146 aa).

Cysteine 96 and cysteine 146 are joined by a disulfide.

Belongs to the leptin family.

The protein resides in the secreted. Its function is as follows. Key player in the regulation of energy balance and body weight control. Once released into the circulation, has central and peripheral effects by binding LEPR, found in many tissues, which results in the activation of several major signaling pathways. In the hypothalamus, acts as an appetite-regulating factor that induces a decrease in food intake and an increase in energy consumption by inducing anorexinogenic factors and suppressing orexigenic neuropeptides, also regulates bone mass and secretion of hypothalamo-pituitary-adrenal hormones. In the periphery, increases basal metabolism, influences reproductive function, regulates pancreatic beta-cell function and insulin secretion, is pro-angiogenic for endothelial cell and affects innate and adaptive immunity. In the arcuate nucleus of the hypothalamus, activates by depolarization POMC neurons inducing FOS and SOCS3 expression to release anorexigenic peptides and inhibits by hyperpolarization NPY neurons inducing SOCS3 with a consequent reduction on release of orexigenic peptides. In addition to its known satiety inducing effect, has a modulatory role in nutrient absorption. In the intestine, reduces glucose absorption by enterocytes by activating PKC and leading to a sequential activation of p38, PI3K and ERK signaling pathways which exerts an inhibitory effect on glucose absorption. Acts as a growth factor on certain tissues, through the activation of different signaling pathways increases expression of genes involved in cell cycle regulation such as CCND1, via JAK2-STAT3 pathway, or VEGFA, via MAPK1/3 and PI3K-AKT1 pathways. May also play an apoptotic role via JAK2-STAT3 pathway and up-regulation of BIRC5 expression. Pro-angiogenic, has mitogenic activity on vascular endothelial cells and plays a role in matrix remodeling by regulating the expression of matrix metalloproteinases (MMPs) and tissue inhibitors of metalloproteinases (TIMPs). In innate immunity, modulates the activity and function of neutrophils by increasing chemotaxis and the secretion of oxygen radicals. Increases phagocytosis by macrophages and enhances secretion of pro-inflammatory mediators. Increases cytotoxic ability of NK cells. Plays a pro-inflammatory role, in synergy with IL1B, by inducing NOS2 which promotes the production of IL6, IL8 and Prostaglandin E2, through a signaling pathway that involves JAK2, PI3K, MAP2K1/MEK1 and MAPK14/p38. In adaptive immunity, promotes the switch of memory T-cells towards T helper-1 cell immune responses. Increases CD4(+)CD25(-) T-cell proliferation and reduces autophagy during TCR (T-cell receptor) stimulation, through MTOR signaling pathway activation and BCL2 up-regulation. The sequence is that of Leptin (LEP) from Ovis aries (Sheep).